The chain runs to 120 residues: UPF0231 protein YacL (120 aa).

It belongs to the UPF0231 family.

The polypeptide is UPF0231 protein YacL (Salmonella typhi).